The following is a 199-amino-acid chain: Holliday junction branch migration complex subunit RuvA (199 aa).

A domain I region spans residues 1 to 64 (MIALLTGKLA…EDAINLYGFR (64 aa)). Positions 65–143 (TQQEKELFQL…KLGLAQPQAG (79 aa)) are domain II. Residues 144 to 148 (GTTAP) form a flexible linker region. The interval 149–199 (AKQEIRDDVLSALINLGYKEAVVQKALAELKVTEDATVELVLKQALKILMK) is domain III.

This sequence belongs to the RuvA family. Homotetramer. Forms an RuvA(8)-RuvB(12)-Holliday junction (HJ) complex. HJ DNA is sandwiched between 2 RuvA tetramers; dsDNA enters through RuvA and exits via RuvB. An RuvB hexamer assembles on each DNA strand where it exits the tetramer. Each RuvB hexamer is contacted by two RuvA subunits (via domain III) on 2 adjacent RuvB subunits; this complex drives branch migration. In the full resolvosome a probable DNA-RuvA(4)-RuvB(12)-RuvC(2) complex forms which resolves the HJ.

The protein resides in the cytoplasm. In terms of biological role, the RuvA-RuvB-RuvC complex processes Holliday junction (HJ) DNA during genetic recombination and DNA repair, while the RuvA-RuvB complex plays an important role in the rescue of blocked DNA replication forks via replication fork reversal (RFR). RuvA specifically binds to HJ cruciform DNA, conferring on it an open structure. The RuvB hexamer acts as an ATP-dependent pump, pulling dsDNA into and through the RuvAB complex. HJ branch migration allows RuvC to scan DNA until it finds its consensus sequence, where it cleaves and resolves the cruciform DNA. In Citrifermentans bemidjiense (strain ATCC BAA-1014 / DSM 16622 / JCM 12645 / Bem) (Geobacter bemidjiensis), this protein is Holliday junction branch migration complex subunit RuvA.